We begin with the raw amino-acid sequence, 250 residues long: Proteasome subunit alpha (250 aa).

Belongs to the peptidase T1A family. As to quaternary structure, the 20S proteasome core is composed of 14 alpha and 14 beta subunits that assemble into four stacked heptameric rings, resulting in a barrel-shaped structure. The two inner rings, each composed of seven catalytic beta subunits, are sandwiched by two outer rings, each composed of seven alpha subunits. The catalytic chamber with the active sites is on the inside of the barrel. Has a gated structure, the ends of the cylinder being occluded by the N-termini of the alpha-subunits. Is capped at one or both ends by the proteasome regulatory ATPase, PAN.

Its subcellular location is the cytoplasm. With respect to regulation, the formation of the proteasomal ATPase PAN-20S proteasome complex, via the docking of the C-termini of PAN into the intersubunit pockets in the alpha-rings, triggers opening of the gate for substrate entry. Interconversion between the open-gate and close-gate conformations leads to a dynamic regulation of the 20S proteasome proteolysis activity. Its function is as follows. Component of the proteasome core, a large protease complex with broad specificity involved in protein degradation. This is Proteasome subunit alpha from Haloquadratum walsbyi (strain DSM 16790 / HBSQ001).